Here is a 159-residue protein sequence, read N- to C-terminus: Peripheral myelin protein 22 (159 aa).

Met1 is a topological domain (cytoplasmic). The chain crosses the membrane as a helical span at residues 2 to 31 (LLLLLGIIVLHVAVLVLLFVATIVSQWIVG). The Extracellular segment spans residues 32–64 (NGHATDLWQNCSTTSGNVQHCLSSSANEWLQSV). A glycan (N-linked (GlcNAc...) asparagine) is linked at Asn41. Residues 65-91 (QATMILSIIFSVLSLFLFFCQLFTLTK) form a helical membrane-spanning segment. The Cytoplasmic segment spans residues 92 to 95 (GGRF). The chain crosses the membrane as a helical span at residues 96-119 (YITGIFQILAGLCVMSAASIYTVR). Residues 120–133 (HPEWHLDSAYSYGF) lie on the Extracellular side of the membrane. The helical transmembrane segment at 134–156 (AYILAWVAFPLALLSGVVYVILR) threads the bilayer. At 157-159 (KRE) the chain is on the cytoplasmic side.

Belongs to the PMP-22/EMP/MP20 family. Post-translationally, ubiquitinated by the DCX(DCAF13) E3 ubiquitin ligase complex, leading to its degradation.

The protein resides in the cell membrane. Might be involved in growth regulation, and in myelinization in the peripheral nervous system. This chain is Peripheral myelin protein 22 (PMP22), found in Equus caballus (Horse).